The chain runs to 419 residues: L-rhamnose isomerase (419 aa).

Mn(2+) is bound by residues histidine 262, aspartate 294, and aspartate 296.

The protein belongs to the rhamnose isomerase family. As to quaternary structure, homotetramer. Requires Mn(2+) as cofactor.

It localises to the cytoplasm. It catalyses the reaction L-rhamnopyranose = L-rhamnulose. It participates in carbohydrate degradation; L-rhamnose degradation; glycerone phosphate from L-rhamnose: step 1/3. In terms of biological role, catalyzes the interconversion of L-rhamnose and L-rhamnulose. The sequence is that of L-rhamnose isomerase from Escherichia coli O139:H28 (strain E24377A / ETEC).